We begin with the raw amino-acid sequence, 1006 residues long: Unconventional myosin-Id (1006 aa).

Position 2 is an N-acetylalanine (Ala2). Residues 9 to 695 (FGKADFVLMD…TLFTLEELRA (687 aa)) form the Myosin motor domain. Residue 102–109 (GESGAGKT) participates in ATP binding. At Ser200 the chain carries Phosphoserine. Position 536 is a phosphotyrosine (Tyr536). Positions 572-594 (MIALVDNLASKEPYYVRCIKPND) are actin-binding. IQ domains lie at 699-719 (IRIV…MRYK) and 721-741 (TKAA…SYIH). Residues 812-1005 (GQRADLGLQR…RSGFILSVPG (194 aa)) enclose the TH1 domain.

The protein belongs to the TRAFAC class myosin-kinesin ATPase superfamily. Myosin family. Interacts (via the two IQ motifs) with calmodulin. Binds an additional calmodulin chain via a third, C-terminal region. Interacts with F-actin. In terms of tissue distribution, expressed in many tissues. Highest levels in brain, followed by lung and ovary; expression is lowest in spleen.

It is found in the cytoplasm. Its subcellular location is the perikaryon. The protein resides in the cell projection. The protein localises to the dendrite. It localises to the early endosome. It is found in the cell cortex. Functionally, unconventional myosin that functions as actin-based motor protein with ATPase activity. Plays a role in endosomal protein trafficking, and especially in the transfer of cargo proteins from early to recycling endosomes. Required for normal planar cell polarity in ciliated tracheal cells, for normal rotational polarity of cilia, and for coordinated, unidirectional ciliary movement in the trachea. Required for normal, polarized cilia organization in brain ependymal epithelial cells. The sequence is that of Unconventional myosin-Id (MYO1D) from Homo sapiens (Human).